The following is a 133-amino-acid chain: Large ribosomal subunit protein bL19 (133 aa).

The protein belongs to the bacterial ribosomal protein bL19 family.

This protein is located at the 30S-50S ribosomal subunit interface and may play a role in the structure and function of the aminoacyl-tRNA binding site. The chain is Large ribosomal subunit protein bL19 from Stenotrophomonas maltophilia (strain K279a).